The sequence spans 209 residues: Uracil phosphoribosyltransferase (209 aa).

Residues arginine 79, arginine 104, and 131-139 (DPMLATGGS) contribute to the 5-phospho-alpha-D-ribose 1-diphosphate site. Residues isoleucine 194 and 199-201 (GDA) contribute to the uracil site. Aspartate 200 serves as a coordination point for 5-phospho-alpha-D-ribose 1-diphosphate.

Belongs to the UPRTase family. Requires Mg(2+) as cofactor.

It carries out the reaction UMP + diphosphate = 5-phospho-alpha-D-ribose 1-diphosphate + uracil. The protein operates within pyrimidine metabolism; UMP biosynthesis via salvage pathway; UMP from uracil: step 1/1. Its activity is regulated as follows. Allosterically activated by GTP. Its function is as follows. Catalyzes the conversion of uracil and 5-phospho-alpha-D-ribose 1-diphosphate (PRPP) to UMP and diphosphate. The protein is Uracil phosphoribosyltransferase of Pediococcus pentosaceus (strain ATCC 25745 / CCUG 21536 / LMG 10740 / 183-1w).